Consider the following 284-residue polypeptide: L-ribulose-5-phosphate 3-epimerase UlaE (284 aa).

It belongs to the L-ribulose-5-phosphate 3-epimerase family.

It catalyses the reaction L-ribulose 5-phosphate = L-xylulose 5-phosphate. The protein operates within cofactor degradation; L-ascorbate degradation; D-xylulose 5-phosphate from L-ascorbate: step 3/4. In terms of biological role, catalyzes the isomerization of L-xylulose-5-phosphate to L-ribulose-5-phosphate. Is involved in the anaerobic L-ascorbate utilization. The protein is L-ribulose-5-phosphate 3-epimerase UlaE of Salmonella paratyphi A (strain AKU_12601).